The following is a 398-amino-acid chain: Pectate lyase 1 (398 aa).

The first 25 residues, 1-25, serve as a signal peptide directing secretion; sequence MGIKHCCYILYFTLALVTLLQPVRS. An N-linked (GlcNAc...) asparagine glycan is attached at asparagine 37. Cysteine 55 and cysteine 72 are disulfide-bonded. Ca(2+)-binding residues include aspartate 195, aspartate 219, and aspartate 223. Arginine 275 is a catalytic residue.

Belongs to the polysaccharide lyase 1 family. Amb a subfamily. In terms of assembly, monomer. Requires Ca(2+) as cofactor. Post-translationally, the N-terminus is blocked. Pollen and flowers.

The catalysed reaction is Eliminative cleavage of (1-&gt;4)-alpha-D-galacturonan to give oligosaccharides with 4-deoxy-alpha-D-galact-4-enuronosyl groups at their non-reducing ends.. It participates in glycan metabolism; pectin degradation; 2-dehydro-3-deoxy-D-gluconate from pectin: step 2/5. Has pectate lyase activity. This Ambrosia artemisiifolia (Common ragweed) protein is Pectate lyase 1.